The following is a 98-amino-acid chain: Histone H4-1 (98 aa).

The segment covering 1–14 (MGGKGGKGGKGLGK) has biased composition (gly residues). Residues 1-20 (MGGKGGKGGKGLGKVGAKKR) are disordered.

Belongs to the histone H4 family. The nucleosome is a histone octamer containing two molecules each of H2A, H2B, H3 and H4 assembled in one H3-H4 heterotetramer and two H2A-H2B heterodimers. The octamer wraps approximately 147 bp of DNA.

The protein localises to the nucleus. It localises to the chromosome. Functionally, core component of nucleosome. Nucleosomes wrap and compact DNA into chromatin, limiting DNA accessibility to the cellular machineries which require DNA as a template. Histones thereby play a central role in transcription regulation, DNA repair, DNA replication and chromosomal stability. DNA accessibility is regulated via a complex set of post-translational modifications of histones, also called histone code, and nucleosome remodeling. The protein is Histone H4-1 of Blepharisma japonicum.